The sequence spans 392 residues: Succinate--CoA ligase [ADP-forming] subunit beta (392 aa).

Residues 9–236 enclose the ATP-grasp domain; that stretch reads RDLFERHGLP…QAAVDPLEQA (228 aa). ATP contacts are provided by residues lysine 45, 52–54, alanine 94, and glutamate 99; that span reads GRG. Positions 191 and 205 each coordinate Mg(2+). Substrate-binding positions include asparagine 256 and 318–320; that span reads GIT.

Belongs to the succinate/malate CoA ligase beta subunit family. As to quaternary structure, heterotetramer of two alpha and two beta subunits. The cofactor is Mg(2+).

It catalyses the reaction succinate + ATP + CoA = succinyl-CoA + ADP + phosphate. The catalysed reaction is GTP + succinate + CoA = succinyl-CoA + GDP + phosphate. It functions in the pathway carbohydrate metabolism; tricarboxylic acid cycle; succinate from succinyl-CoA (ligase route): step 1/1. In terms of biological role, succinyl-CoA synthetase functions in the citric acid cycle (TCA), coupling the hydrolysis of succinyl-CoA to the synthesis of either ATP or GTP and thus represents the only step of substrate-level phosphorylation in the TCA. The beta subunit provides nucleotide specificity of the enzyme and binds the substrate succinate, while the binding sites for coenzyme A and phosphate are found in the alpha subunit. The polypeptide is Succinate--CoA ligase [ADP-forming] subunit beta (Salinispora arenicola (strain CNS-205)).